A 708-amino-acid chain; its full sequence is F-box only protein 43 (708 aa).

Positions Met35–Pro55 are disordered. Phosphoserine is present on Ser76. The residue at position 234 (Thr234) is a Phosphothreonine. Residues Pro320–Glu426 are disordered. The span at Ser327–Asn337 shows a compositional bias: polar residues. Ser334 is subject to Phosphoserine. Residues Lys374 to Ser385 are compositionally biased toward basic residues. Basic and acidic residues predominate over residues Glu399 to Ala411. Positions Met490 to Lys547 constitute an F-box domain. A ZBR-type zinc finger spans residues Ala636 to Gly684. Zn(2+) is bound by residues Cys640, Cys643, Cys658, Cys663, Cys668, Cys671, His676, and Cys681. A disordered region spans residues Ser682–Leu708.

Part of a SCF (SKP1-cullin-F-box) protein ligase complex. According to PubMed:34595750 interaction with SKP1 does not occur. Interacts with ANAPC2; the interaction is direct, ANAPC4, CDC16, CDC23; the interaction is direct, ANAPC10; the interaction is direct and CDC26, during spermatogenesis. May interact with CDC20. Post-translationally, phosphorylated on Ser-76, Thr-234 and Ser-334 in response to calcium, which is a prerequisite for ubiquitination and proteasomal degradation. Ubiquitinated in response to calcium, which promotes proteasomal degradation. In terms of tissue distribution, expressed in the testis.

It functions in the pathway protein modification; protein ubiquitination. In terms of biological role, required to establish and maintain the arrest of oocytes at the second meiotic metaphase until fertilization. Acts by inhibiting the anaphase-promoting complex/cyclosome (APC/C) ubiquitin ligase. Probably recognizes and binds to some phosphorylated proteins and promotes their ubiquitination and degradation. Plays a vital role in modulating the ubiquitilation of CCNB1 and CDK1 during gametogenesis. The chain is F-box only protein 43 (FBXO43) from Homo sapiens (Human).